The primary structure comprises 404 residues: Probable tRNA sulfurtransferase (404 aa).

Positions 61–166 (EAVSERLKDV…SGYSYIMCDE (106 aa)) constitute a THUMP domain. Residues 184-185 (LL), 209-210 (HF), Arg-266, Gly-288, and Gln-297 each bind ATP.

The protein belongs to the ThiI family.

It is found in the cytoplasm. It carries out the reaction [ThiI sulfur-carrier protein]-S-sulfanyl-L-cysteine + a uridine in tRNA + 2 reduced [2Fe-2S]-[ferredoxin] + ATP + H(+) = [ThiI sulfur-carrier protein]-L-cysteine + a 4-thiouridine in tRNA + 2 oxidized [2Fe-2S]-[ferredoxin] + AMP + diphosphate. The catalysed reaction is [ThiS sulfur-carrier protein]-C-terminal Gly-Gly-AMP + S-sulfanyl-L-cysteinyl-[cysteine desulfurase] + AH2 = [ThiS sulfur-carrier protein]-C-terminal-Gly-aminoethanethioate + L-cysteinyl-[cysteine desulfurase] + A + AMP + 2 H(+). Its pathway is cofactor biosynthesis; thiamine diphosphate biosynthesis. Catalyzes the ATP-dependent transfer of a sulfur to tRNA to produce 4-thiouridine in position 8 of tRNAs, which functions as a near-UV photosensor. Also catalyzes the transfer of sulfur to the sulfur carrier protein ThiS, forming ThiS-thiocarboxylate. This is a step in the synthesis of thiazole, in the thiamine biosynthesis pathway. The sulfur is donated as persulfide by IscS. The polypeptide is Probable tRNA sulfurtransferase (Bacillus cereus (strain AH820)).